A 497-amino-acid polypeptide reads, in one-letter code: Vacuolar-processing enzyme beta-isozyme 1 (497 aa).

The signal sequence occupies residues 1-23 (MAARCWVWGFVVALLAVAAAADG). A glycan (N-linked (GlcNAc...) asparagine) is linked at asparagine 153. Residue histidine 180 is part of the active site. The active-site Nucleophile is cysteine 222. Cysteine 255 and cysteine 269 form a disulfide bridge. N-linked (GlcNAc...) asparagine glycosylation is present at asparagine 340. 2 cysteine pairs are disulfide-bonded: cysteine 432–cysteine 462 and cysteine 444–cysteine 479.

This sequence belongs to the peptidase C13 family. Post-translationally, auto-catalytic activation.

It localises to the protein storage vacuole. It catalyses the reaction Hydrolysis of proteins and small molecule substrates at -Asn-|-Xaa- bonds.. In terms of biological role, asparagine-specific endopeptidase that may be involved in processing of proteins targeted to vacuoles. Cysteine protease required for post-translational proteolysis of seed storage proteins in the protein storage vacuole (PSV) of developing seeds, by processing of proglutelin precursor to mature glutelin subunits, thus contributing to the formation of protein crystalline structures in PSV. This Oryza sativa subsp. indica (Rice) protein is Vacuolar-processing enzyme beta-isozyme 1.